The sequence spans 335 residues: Nucleoid-associated protein YejK (335 aa).

The protein belongs to the YejK family.

Its subcellular location is the cytoplasm. The protein localises to the nucleoid. The polypeptide is Nucleoid-associated protein YejK (Salmonella schwarzengrund (strain CVM19633)).